The chain runs to 831 residues: Translation initiation factor IF-2 (831 aa).

In terms of domain architecture, tr-type G spans 329-499; the sequence is TRAPVVTVMG…LLISEMQDLK (171 aa). A G1 region spans residues 338–345; sequence GHVDHGKT. 338–345 contacts GTP; that stretch reads GHVDHGKT. Residues 363–367 are G2; the sequence is GITQH. A G3 region spans residues 385 to 388; the sequence is DTPG. GTP is bound by residues 385-389 and 439-442; these read DTPGH and NKID. Positions 439–442 are G4; sequence NKID. Residues 475-477 are G5; the sequence is SAL.

Belongs to the TRAFAC class translation factor GTPase superfamily. Classic translation factor GTPase family. IF-2 subfamily.

The protein resides in the cytoplasm. One of the essential components for the initiation of protein synthesis. Protects formylmethionyl-tRNA from spontaneous hydrolysis and promotes its binding to the 30S ribosomal subunits. Also involved in the hydrolysis of GTP during the formation of the 70S ribosomal complex. This is Translation initiation factor IF-2 from Rickettsia typhi (strain ATCC VR-144 / Wilmington).